Here is a 258-residue protein sequence, read N- to C-terminus: Type III pantothenate kinase (258 aa).

6–13 (DVGNTNTV) contributes to the ATP binding site. Residues Tyr100 and 107-110 (GADR) each bind substrate. Residue Asp109 is the Proton acceptor of the active site. Asp129 serves as a coordination point for K(+). Residue Thr132 participates in ATP binding. Thr184 lines the substrate pocket.

Belongs to the type III pantothenate kinase family. As to quaternary structure, homodimer. Requires NH4(+) as cofactor. It depends on K(+) as a cofactor.

The protein localises to the cytoplasm. It carries out the reaction (R)-pantothenate + ATP = (R)-4'-phosphopantothenate + ADP + H(+). It participates in cofactor biosynthesis; coenzyme A biosynthesis; CoA from (R)-pantothenate: step 1/5. In terms of biological role, catalyzes the phosphorylation of pantothenate (Pan), the first step in CoA biosynthesis. The chain is Type III pantothenate kinase from Bacillus velezensis (strain DSM 23117 / BGSC 10A6 / LMG 26770 / FZB42) (Bacillus amyloliquefaciens subsp. plantarum).